The sequence spans 353 residues: Glycerol-3-phosphate dehydrogenase [NAD(P)+] (353 aa).

NADPH-binding residues include W11, R40, and K115. Sn-glycerol 3-phosphate contacts are provided by K115, G156, and S158. NADPH is bound at residue A160. Residues K211, D264, S274, R275, and N276 each contribute to the sn-glycerol 3-phosphate site. Catalysis depends on K211, which acts as the Proton acceptor. R275 contacts NADPH. Residues V299 and E301 each contribute to the NADPH site.

It belongs to the NAD-dependent glycerol-3-phosphate dehydrogenase family.

The protein resides in the cytoplasm. It catalyses the reaction sn-glycerol 3-phosphate + NAD(+) = dihydroxyacetone phosphate + NADH + H(+). The enzyme catalyses sn-glycerol 3-phosphate + NADP(+) = dihydroxyacetone phosphate + NADPH + H(+). It functions in the pathway membrane lipid metabolism; glycerophospholipid metabolism. Catalyzes the reduction of the glycolytic intermediate dihydroxyacetone phosphate (DHAP) to sn-glycerol 3-phosphate (G3P), the key precursor for phospholipid synthesis. The sequence is that of Glycerol-3-phosphate dehydrogenase [NAD(P)+] from Polaromonas sp. (strain JS666 / ATCC BAA-500).